The primary structure comprises 504 residues: Xylose import ATP-binding protein XylG (504 aa).

ABC transporter domains are found at residues 6–243 (LEMQ…VGRE) and 262–504 (VRNF…TGGK). Position 38–45 (38–45 (GENGAGKS)) interacts with ATP.

This sequence belongs to the ABC transporter superfamily. Xylose importer (TC 3.A.1.2.4) family. In terms of assembly, the complex is composed of two ATP-binding proteins (XylG), two transmembrane proteins (XylH) and a solute-binding protein (XylF).

It is found in the cell membrane. It carries out the reaction D-xylose(out) + ATP + H2O = D-xylose(in) + ADP + phosphate + H(+). Part of the ABC transporter complex XylFGH involved in xylose import. Responsible for energy coupling to the transport system. This chain is Xylose import ATP-binding protein XylG, found in Moorella thermoacetica (strain ATCC 39073 / JCM 9320).